Reading from the N-terminus, the 368-residue chain is AAVRASPDLLGSRGEDTASDGSVVWAKPYTFRAPPTPGQNSLQRIIVFGDMGKAERDGSNEFANYQPGSLNTTDRLIEDLDNYDIVFHIGDMPYANGYLSQWDQFTAQVAPISAKKPYMVASGNHERDWPNTGGFFDVKDSGGECGVPAETMYYYPAENRANFWYKVDYGMFRFCVGDSEHDWREGTPQYKFIEECLSTVDRKHQPWLIFTAHRVLGYSSNSWYADQGSFEEPEGRESLQKLWQRYRVDIAYFGHVHNYERTCPLYQSQCVNADKTHYSGTMNGTIFVVAGGGGSHLSSYTTAIPKWSIFRDHDYGFTKLTAFNHSSLLFEYMKSSDGKVYDSFTIHRDYRDVLSCVHDSCFPTTLAS.

The protein belongs to the metallophosphoesterase superfamily. As to quaternary structure, monomer and homomer. Post-translationally, glycosylated.

Its subcellular location is the plastid. It is found in the chloroplast. Its function is as follows. Hydrolyzes pyrophosphate, phosphodiester and phosphosulfate linkages of nucleotide-sugars, sulfonucleotides and nucleoside di and triphosphates. Highest activity observed with the substrates ADP-glucose and adenosine 5'-phosphosulfate. This chain is Nucleotide pyrophosphatase/phosphodiesterase, found in Hordeum vulgare (Barley).